Consider the following 275-residue polypeptide: LexA repressor (275 aa).

The interval Met-1–Thr-50 is disordered. A DNA-binding region (H-T-H motif) is located at residues Met-73 to Met-93. The disordered stretch occupies residues Arg-114–Pro-151. Residues Ser-199 and Lys-236 each act as for autocatalytic cleavage activity in the active site.

The protein belongs to the peptidase S24 family. As to quaternary structure, homodimer.

It catalyses the reaction Hydrolysis of Ala-|-Gly bond in repressor LexA.. Its function is as follows. Represses a number of genes involved in the response to DNA damage (SOS response), including recA and lexA. In the presence of single-stranded DNA, RecA interacts with LexA causing an autocatalytic cleavage which disrupts the DNA-binding part of LexA, leading to derepression of the SOS regulon and eventually DNA repair. This Acidothermus cellulolyticus (strain ATCC 43068 / DSM 8971 / 11B) protein is LexA repressor.